The following is a 116-amino-acid chain: Distal membrane-arm assembly complex protein 1 (116 aa).

Positions 1–39 (MGSRLSQPFESYITAPPGTAAAPAKPAPPATPGAPTSPA) are disordered. A compositionally biased stretch (low complexity) spans 14–24 (TAPPGTAAAPA). Helical transmembrane passes span 52 to 69 (VLSG…YWVA) and 82 to 104 (WTIT…GIVV).

In terms of assembly, interacts with incompletely assembled mitochondrial NADH:ubiquinone oxidoreductase complex (complex I).

Its subcellular location is the mitochondrion inner membrane. Its function is as follows. Required for the assembly of the mitochondrial NADH:ubiquinone oxidoreductase complex (complex I). Involved in the assembly of the distal region of complex I. In Homo sapiens (Human), this protein is Distal membrane-arm assembly complex protein 1.